A 552-amino-acid polypeptide reads, in one-letter code: Asparagine--tRNA ligase, cytoplasmic (552 aa).

The tract at residues 1 to 23 (MSQVYVNEKTGADSTDVSGSEQQ) is disordered. Positions 12–23 (ADSTDVSGSEQQ) are enriched in polar residues.

Belongs to the class-II aminoacyl-tRNA synthetase family.

Its subcellular location is the cytoplasm. The enzyme catalyses tRNA(Asn) + L-asparagine + ATP = L-asparaginyl-tRNA(Asn) + AMP + diphosphate + H(+). This is Asparagine--tRNA ligase, cytoplasmic (DED81) from Debaryomyces hansenii (strain ATCC 36239 / CBS 767 / BCRC 21394 / JCM 1990 / NBRC 0083 / IGC 2968) (Yeast).